Reading from the N-terminus, the 419-residue chain is S-adenosylmethionine synthase (419 aa).

Residue histidine 15 coordinates ATP. Residue aspartate 17 coordinates Mg(2+). Glutamate 43 contacts K(+). 2 residues coordinate L-methionine: glutamate 56 and glutamine 99. The segment at glutamine 99–cysteine 109 is flexible loop. Residues aspartate 173–lysine 175, arginine 253–phenylalanine 254, aspartate 262, arginine 268–lysine 269, alanine 285, and lysine 289 contribute to the ATP site. Aspartate 262 lines the L-methionine pocket. Position 293 (lysine 293) interacts with L-methionine.

It belongs to the AdoMet synthase family. In terms of assembly, homotetramer; dimer of dimers. Mg(2+) serves as cofactor. K(+) is required as a cofactor.

The protein resides in the cytoplasm. The enzyme catalyses L-methionine + ATP + H2O = S-adenosyl-L-methionine + phosphate + diphosphate. It participates in amino-acid biosynthesis; S-adenosyl-L-methionine biosynthesis; S-adenosyl-L-methionine from L-methionine: step 1/1. Catalyzes the formation of S-adenosylmethionine (AdoMet) from methionine and ATP. The overall synthetic reaction is composed of two sequential steps, AdoMet formation and the subsequent tripolyphosphate hydrolysis which occurs prior to release of AdoMet from the enzyme. The polypeptide is S-adenosylmethionine synthase (Gloeobacter violaceus (strain ATCC 29082 / PCC 7421)).